An 885-amino-acid chain; its full sequence is Probable alpha-glucosidase Os06g0675700 (885 aa).

Positions 1-33 (MMGSPPAPPARRLGALAVFLLALFLAAPWGVDC) are cleaved as a signal peptide. N-linked (GlcNAc...) asparagine glycosylation is found at Asn195, Asn378, and Asn397. Catalysis depends on residues Asp443 and Glu446. N-linked (GlcNAc...) asparagine glycans are attached at residues Asn467 and Asn477. Catalysis depends on Asp540, which acts as the Proton donor. Residues Asn576 and Asn844 are each glycosylated (N-linked (GlcNAc...) asparagine).

Belongs to the glycosyl hydrolase 31 family.

The enzyme catalyses Hydrolysis of terminal, non-reducing (1-&gt;4)-linked alpha-D-glucose residues with release of alpha-D-glucose.. The polypeptide is Probable alpha-glucosidase Os06g0675700 (Oryza sativa subsp. japonica (Rice)).